A 445-amino-acid polypeptide reads, in one-letter code: Hydroxymethylglutaryl-CoA synthase (445 aa).

Residue Asp-31 coordinates (3S)-3-hydroxy-3-methylglutaryl-CoA. Glu-83 acts as the Proton donor/acceptor in catalysis. Residues Cys-120, Thr-163, Ser-211, His-244, Lys-253, Asn-328, and Ser-364 each coordinate (3S)-3-hydroxy-3-methylglutaryl-CoA. Cys-120 functions as the Acyl-thioester intermediate in the catalytic mechanism. His-244 (proton donor/acceptor) is an active-site residue.

The protein belongs to the thiolase-like superfamily. HMG-CoA synthase family.

It carries out the reaction acetoacetyl-CoA + acetyl-CoA + H2O = (3S)-3-hydroxy-3-methylglutaryl-CoA + CoA + H(+). Its pathway is metabolic intermediate biosynthesis; (R)-mevalonate biosynthesis; (R)-mevalonate from acetyl-CoA: step 2/3. Its activity is regulated as follows. In contrast to bacterial and eukaryotic HMG-CoA synthases, is insensitive to feedback substrate inhibition by acetoacetyl-CoA. Enzymatic activity is inhibited by hymeglusin, which also blocks the propagation of H.volcanii cells in vivo, indicating the critical role that the mevalonate pathway plays in isoprenoid biosynthesis by these archaea. Functionally, catalyzes the condensation of acetyl-CoA with acetoacetyl-CoA to form 3-hydroxy-3-methylglutaryl-CoA (HMG-CoA). Functions in the mevalonate (MVA) pathway leading to isopentenyl diphosphate (IPP), a key precursor for the biosynthesis of isoprenoid compounds such as archaeal membrane lipids. This Haloferax volcanii (strain ATCC 29605 / DSM 3757 / JCM 8879 / NBRC 14742 / NCIMB 2012 / VKM B-1768 / DS2) (Halobacterium volcanii) protein is Hydroxymethylglutaryl-CoA synthase (hmgB).